We begin with the raw amino-acid sequence, 130 residues long: Small ribosomal subunit protein uS9 (130 aa).

Belongs to the universal ribosomal protein uS9 family.

This Pectobacterium carotovorum subsp. carotovorum (strain PC1) protein is Small ribosomal subunit protein uS9.